Here is a 251-residue protein sequence, read N- to C-terminus: Triosephosphate isomerase (251 aa).

A substrate-binding site is contributed by 9–11 (NWK). Catalysis depends on H95, which acts as the Electrophile. Residue E167 is the Proton acceptor of the active site. Substrate contacts are provided by residues G173, S213, and 234–235 (GG).

Belongs to the triosephosphate isomerase family. As to quaternary structure, homodimer.

The protein resides in the cytoplasm. It carries out the reaction D-glyceraldehyde 3-phosphate = dihydroxyacetone phosphate. Its pathway is carbohydrate biosynthesis; gluconeogenesis. It functions in the pathway carbohydrate degradation; glycolysis; D-glyceraldehyde 3-phosphate from glycerone phosphate: step 1/1. Its function is as follows. Involved in the gluconeogenesis. Catalyzes stereospecifically the conversion of dihydroxyacetone phosphate (DHAP) to D-glyceraldehyde-3-phosphate (G3P). This chain is Triosephosphate isomerase, found in Ligilactobacillus salivarius (strain UCC118) (Lactobacillus salivarius).